The primary structure comprises 233 residues: DNA repair protein RecO (233 aa).

Belongs to the RecO family.

Its function is as follows. Involved in DNA repair and RecF pathway recombination. The chain is DNA repair protein RecO from Pseudomonas aeruginosa (strain LESB58).